We begin with the raw amino-acid sequence, 376 residues long: N-acetyldiaminopimelate deacetylase (376 aa).

Residue Asp69 is part of the active site. Glu128 acts as the Proton acceptor in catalysis.

Belongs to the peptidase M20A family. N-acetyldiaminopimelate deacetylase subfamily.

The catalysed reaction is N-acetyl-(2S,6S)-2,6-diaminopimelate + H2O = (2S,6S)-2,6-diaminopimelate + acetate. Its pathway is amino-acid biosynthesis; L-lysine biosynthesis via DAP pathway; LL-2,6-diaminopimelate from (S)-tetrahydrodipicolinate (acetylase route): step 3/3. Functionally, catalyzes the conversion of N-acetyl-diaminopimelate to diaminopimelate and acetate. The sequence is that of N-acetyldiaminopimelate deacetylase from Streptococcus pneumoniae serotype 4 (strain ATCC BAA-334 / TIGR4).